The following is a 130-amino-acid chain: MKVAVGVHIIADLYGVDARLISSSEAISPIMENAIQEGHLTKISSEYYQFRPMGASGIALLAESHLSFHTWPEYGLVTLDIYTCGDRSNADRAFDYIIKVLKPTSVDYRKMERGSQIKEDVRITDPQMML.

S64 functions as the Schiff-base intermediate with substrate; via pyruvic acid in the catalytic mechanism. S64 carries the post-translational modification Pyruvic acid (Ser); by autocatalysis. H69 (proton acceptor; for processing activity) is an active-site residue. C84 acts as the Proton donor; for catalytic activity in catalysis.

This sequence belongs to the prokaryotic AdoMetDC family. Type 1 subfamily. Heterotetramer of two alpha and two beta chains arranged as a dimer of alpha/beta heterodimers. Pyruvate serves as cofactor. In terms of processing, is synthesized initially as an inactive proenzyme. Formation of the active enzyme involves a self-maturation process in which the active site pyruvoyl group is generated from an internal serine residue via an autocatalytic post-translational modification. Two non-identical subunits are generated from the proenzyme in this reaction, and the pyruvate is formed at the N-terminus of the alpha chain, which is derived from the carboxyl end of the proenzyme. The post-translation cleavage follows an unusual pathway, termed non-hydrolytic serinolysis, in which the side chain hydroxyl group of the serine supplies its oxygen atom to form the C-terminus of the beta chain, while the remainder of the serine residue undergoes an oxidative deamination to produce ammonia and the pyruvoyl group blocking the N-terminus of the alpha chain.

The catalysed reaction is S-adenosyl-L-methionine + H(+) = S-adenosyl 3-(methylsulfanyl)propylamine + CO2. It functions in the pathway amine and polyamine biosynthesis; S-adenosylmethioninamine biosynthesis; S-adenosylmethioninamine from S-adenosyl-L-methionine: step 1/1. Catalyzes the decarboxylation of S-adenosylmethionine to S-adenosylmethioninamine (dcAdoMet), the propylamine donor required for the synthesis of the polyamines spermine and spermidine from the diamine putrescine. The chain is S-adenosylmethionine decarboxylase proenzyme from Picrophilus torridus (strain ATCC 700027 / DSM 9790 / JCM 10055 / NBRC 100828 / KAW 2/3).